A 475-amino-acid polypeptide reads, in one-letter code: FAD-dependent monooxygenase spyC (475 aa).

Residues 1-24 (MTAKPPFKVIIVGGSIAGLTLAHC) form the signal peptide. Positions 36, 50, 109, 310, and 323 each coordinate FAD. The helical transmembrane segment at 444-464 (LLIPFLYPVVAFSLCVLAWIG) threads the bilayer.

Belongs to the paxM FAD-dependent monooxygenase family. The cofactor is FAD.

Its subcellular location is the membrane. It carries out the reaction (2E,6E,10E)-geranylgeranyl-triacetate lactone + AH2 + O2 = (S)-(2E,6E,10E)-epoxygeranylgeranyl-triacetate lactone + A + H2O. Its pathway is secondary metabolite biosynthesis; terpenoid biosynthesis. FAD-dependent monooxygenase spyC; part of the gene cluster that mediates the biosynthesis of meroterpenoids called sartorypyrones. Within the pathway, spyC catalyzes the epoxidation of geranylgeranyl-triacetate lactone at the terminal olein to yield epoxygeranylgeranyl-triacetate lactone. The biosynthesis of sartorypyrones begins with the production of triacetic acid lactone (TAL) by the NR-PKS spyA using one molecule of acetyl-CoA and two molecules of malonyl-CoA. The prenyltransferase spyF then conjugates geranylgeranyl pyrophosphate (GGPP) to TAL to form geranylgeranyl-triacetate lactone, for which the pathway-specific geranylgeranyl pyrophosphate synthase (GGPS) spyE is required to provide GGPP. Subsequently, geranylgeranyl-triacetate lactone is epoxidized at the terminal olein by the FAD-dependent monooxygenase spyC, followed by cyclization of the terpenoid component catalyzed by the terpene cyclase spyD to produce both the bicyclic sartorypyrone F and the monocyclic sartorypyrone D. Finally, the last step of the biosynthesis involves the acetylation of the meroterpenoids sartorypyrones D and F by the acetyltransferase SpyB to produce sartorypyrones A and G, respectively. The chain is FAD-dependent monooxygenase spyC from Aspergillus fumigatus (strain ATCC MYA-4609 / CBS 101355 / FGSC A1100 / Af293) (Neosartorya fumigata).